A 1022-amino-acid chain; its full sequence is Integrator complex subunit 4 (1022 aa).

Residues threonine 148 and lysine 184 each contribute to the 1D-myo-inositol hexakisphosphate site. The disordered stretch occupies residues 818-840 (KDEEEKPPVVETDMPMKESVSRD).

Belongs to the Integrator subunit 4 family. Belongs to the multiprotein complex Integrator, at least composed of IntS1, IntS2, IntS3, IntS4, omd/IntS5, IntS6, defl/IntS7, IntS8, IntS9, IntS10, IntS11, IntS12, asun/IntS13, IntS14 and IntS15. The core complex associates with protein phosphatase 2A subunits mts/PP2A and Pp2A-29B, to form the Integrator-PP2A (INTAC) complex. IntS4 is part of the RNA endonuclease subcomplex, composed of IntS4, IntS9, IntS11 and inositol hexakisphosphate (InsP6).

The protein resides in the nucleus. In terms of biological role, component of the integrator complex, a multiprotein complex that terminates RNA polymerase II (Pol II) transcription in the promoter-proximal region of genes. The integrator complex provides a quality checkpoint during transcription elongation by driving premature transcription termination of transcripts that are unfavorably configured for transcriptional elongation: the complex terminates transcription by (1) catalyzing dephosphorylation of the C-terminal domain (CTD) of Pol II subunit Polr2A/Rbp1 and Spt5, and (2) degrading the exiting nascent RNA transcript via endonuclease activity. The integrator complex is also involved in the 3'-end processing of the U7 snRNA, and also the spliceosomal snRNAs U1, U2, U4 and U5. The protein is Integrator complex subunit 4 of Drosophila melanogaster (Fruit fly).